The chain runs to 366 residues: tRNA/tmRNA (uracil-C(5))-methyltransferase (366 aa).

S-adenosyl-L-methionine is bound by residues Q190, Y218, N223, E239, and D299. C324 (nucleophile) is an active-site residue. E358 (proton acceptor) is an active-site residue.

The protein belongs to the class I-like SAM-binding methyltransferase superfamily. RNA M5U methyltransferase family. TrmA subfamily.

The enzyme catalyses uridine(54) in tRNA + S-adenosyl-L-methionine = 5-methyluridine(54) in tRNA + S-adenosyl-L-homocysteine + H(+). It carries out the reaction uridine(341) in tmRNA + S-adenosyl-L-methionine = 5-methyluridine(341) in tmRNA + S-adenosyl-L-homocysteine + H(+). Dual-specificity methyltransferase that catalyzes the formation of 5-methyluridine at position 54 (m5U54) in all tRNAs, and that of position 341 (m5U341) in tmRNA (transfer-mRNA). The sequence is that of tRNA/tmRNA (uracil-C(5))-methyltransferase from Escherichia fergusonii (strain ATCC 35469 / DSM 13698 / CCUG 18766 / IAM 14443 / JCM 21226 / LMG 7866 / NBRC 102419 / NCTC 12128 / CDC 0568-73).